The chain runs to 231 residues: S-norcoclaurine synthase 2 (231 aa).

107–109 (YKE) is a dopamine binding site. The active-site Proton donor is the Lys121. A (4-hydroxyphenyl)acetaldehyde-binding site is contributed by Asp140. A helical membrane pass occupies residues 210–230 (LLLCLIICLVIAGGMFVAGVP).

This sequence belongs to the BetVI family. Expressed in roots, stems and leaves. Detected in flower buds and germinating seeds. Low expression in carpels. Restricted to sieve elements of the phloem adjacent or proximal to laticifers.

The protein resides in the endoplasmic reticulum membrane. The protein localises to the vacuole membrane. It catalyses the reaction (4-hydroxyphenyl)acetaldehyde + dopamine = (S)-norcoclaurine + H2O. Its pathway is alkaloid biosynthesis; (S)-reticuline biosynthesis. With respect to regulation, activity doubles within 5 hours of elicitor treatment and continues to increase for at least 80 hours. Involved in the biosynthesis of (S)-coclaurine, the common precursor of all benzylisoquinoline alkaloids such as morphine, sanguinarine, codeine or papaverine. Condenses dopamine and 4-hydroxyphenylacetaldehyde. The polypeptide is S-norcoclaurine synthase 2 (Papaver somniferum (Opium poppy)).